The chain runs to 283 residues: Elongation factor Ts (283 aa).

The interval 79-82 (TDFV) is involved in Mg(2+) ion dislocation from EF-Tu.

It belongs to the EF-Ts family.

The protein resides in the cytoplasm. Associates with the EF-Tu.GDP complex and induces the exchange of GDP to GTP. It remains bound to the aminoacyl-tRNA.EF-Tu.GTP complex up to the GTP hydrolysis stage on the ribosome. The sequence is that of Elongation factor Ts from Shewanella frigidimarina (strain NCIMB 400).